The following is a 497-amino-acid chain: MTAATLAQLRVDNSFAALPAAFYTRLAPQPLTAPRLLHANEQAAALIGLSADALRSDEFLRVFSGQQPLPGGQTLAAVYSGHQFGVWAGQLGDGRAHLLGEVAGPDGNWELQLKGAGMTPYSRMGDGRAVLRSSVREYLASEAMHGLGIPTTRSLALVVSDDPVMRETVETAAIVTRMSPSFVRFGSFEHWSSRRQPDELRILADYVIDKFYPECREPRPGEAPGPDGALLRMLAEVTRRTAELMAGWQAVGFCHGVMNTDNMSILGLTLDYGPYGFMDAFRLDHICNHSDSEGRYAWNRQPSVALWNLYRLGGSLHALVPDVEALRAVLDSYEVIFTRAFHQRMAAKLGLREWRADDEPLLDDLLRLMHDNRADFTLTFRRLADAVRGRPQGLQDLFIDRDAALAWFERLAARHAQEGAGNDAQARAAGMDAVNPLYVLRNHLAEQAIRAAKAGDAGEIDTLLALLRDPCVEQPGRDAYAALPPDWAGGIEVSCSS.

Residues G92, G94, R95, K114, D126, G127, R177, and R184 each coordinate ATP. D261 acts as the Proton acceptor in catalysis. Mg(2+) is bound by residues N262 and D271. Residue D271 coordinates ATP.

Belongs to the SELO family. It depends on Mg(2+) as a cofactor. Mn(2+) is required as a cofactor.

It carries out the reaction L-seryl-[protein] + ATP = 3-O-(5'-adenylyl)-L-seryl-[protein] + diphosphate. The enzyme catalyses L-threonyl-[protein] + ATP = 3-O-(5'-adenylyl)-L-threonyl-[protein] + diphosphate. The catalysed reaction is L-tyrosyl-[protein] + ATP = O-(5'-adenylyl)-L-tyrosyl-[protein] + diphosphate. It catalyses the reaction L-histidyl-[protein] + UTP = N(tele)-(5'-uridylyl)-L-histidyl-[protein] + diphosphate. It carries out the reaction L-seryl-[protein] + UTP = O-(5'-uridylyl)-L-seryl-[protein] + diphosphate. The enzyme catalyses L-tyrosyl-[protein] + UTP = O-(5'-uridylyl)-L-tyrosyl-[protein] + diphosphate. Nucleotidyltransferase involved in the post-translational modification of proteins. It can catalyze the addition of adenosine monophosphate (AMP) or uridine monophosphate (UMP) to a protein, resulting in modifications known as AMPylation and UMPylation. The sequence is that of Protein nucleotidyltransferase YdiU from Bordetella petrii (strain ATCC BAA-461 / DSM 12804 / CCUG 43448).